Consider the following 144-residue polypeptide: Large ribosomal subunit protein uL16 (144 aa).

Belongs to the universal ribosomal protein uL16 family. As to quaternary structure, part of the 50S ribosomal subunit.

Its function is as follows. Binds 23S rRNA and is also seen to make contacts with the A and possibly P site tRNAs. In Natranaerobius thermophilus (strain ATCC BAA-1301 / DSM 18059 / JW/NM-WN-LF), this protein is Large ribosomal subunit protein uL16.